The sequence spans 374 residues: Queuine tRNA-ribosyltransferase (374 aa).

D89 (proton acceptor) is an active-site residue. Residues 89–93 (DSGGF), D143, Q187, and G214 contribute to the substrate site. The interval 245–251 (GVGKPED) is RNA binding. D264 acts as the Nucleophile in catalysis. Positions 269–273 (TRNAR) are RNA binding; important for wobble base 34 recognition. Zn(2+)-binding residues include C302, C304, C307, and H333.

The protein belongs to the queuine tRNA-ribosyltransferase family. As to quaternary structure, homodimer. Within each dimer, one monomer is responsible for RNA recognition and catalysis, while the other monomer binds to the replacement base PreQ1. The cofactor is Zn(2+).

It catalyses the reaction 7-aminomethyl-7-carbaguanine + guanosine(34) in tRNA = 7-aminomethyl-7-carbaguanosine(34) in tRNA + guanine. Its pathway is tRNA modification; tRNA-queuosine biosynthesis. In terms of biological role, catalyzes the base-exchange of a guanine (G) residue with the queuine precursor 7-aminomethyl-7-deazaguanine (PreQ1) at position 34 (anticodon wobble position) in tRNAs with GU(N) anticodons (tRNA-Asp, -Asn, -His and -Tyr). Catalysis occurs through a double-displacement mechanism. The nucleophile active site attacks the C1' of nucleotide 34 to detach the guanine base from the RNA, forming a covalent enzyme-RNA intermediate. The proton acceptor active site deprotonates the incoming PreQ1, allowing a nucleophilic attack on the C1' of the ribose to form the product. After dissociation, two additional enzymatic reactions on the tRNA convert PreQ1 to queuine (Q), resulting in the hypermodified nucleoside queuosine (7-(((4,5-cis-dihydroxy-2-cyclopenten-1-yl)amino)methyl)-7-deazaguanosine). This chain is Queuine tRNA-ribosyltransferase, found in Shewanella sp. (strain W3-18-1).